The following is a 279-amino-acid chain: BEN domain-containing protein 6 (279 aa).

Residues 1-15 (MQKIVQTDEITNTQA) are compositionally biased toward polar residues. Disordered stretches follow at residues 1 to 65 (MQKI…LAEL) and 134 to 172 (RATN…TDEK). Residues 62–99 (LAELSKEELCAKIKSLKEKLTNTRKENSRLRQSLVMLQ) are a coiled coil. The segment covering 134–148 (RATNNSSPDSFASTC) has biased composition (polar residues). Residues 162–172 (KPEEEHQTDEK) show a composition bias toward basic and acidic residues. The BEN domain occupies 171–271 (EKQFQIEKWQ…NCTKKPNLSK (101 aa)).

As to quaternary structure, interacts (via BEN domain) with RBPJ.

The protein localises to the nucleus. Its function is as follows. Acts as a corepressor of recombining binding protein suppressor hairless (RBPJ) and inhibits Notch signaling in neural stem cells, thereby opposing their self-renewal and promoting neurogenesis. The polypeptide is BEN domain-containing protein 6 (BEND6) (Homo sapiens (Human)).